Reading from the N-terminus, the 328-residue chain is Beta-agarase C (328 aa).

Residues 1-17 (MNLTKMAVFAASLFCLA) form the signal peptide. Positions 18–67 (CKNDIDTELEKKSIPESEIQKSEEKLPNEEELTPTDPDEETNKEETVTAN) are excised as a propeptide. Basic and acidic residues predominate over residues 26–45 (LEKKSIPESEIQKSEEKLPN). The tract at residues 26-61 (LEKKSIPESEIQKSEEKLPNEEELTPTDPDEETNKE) is disordered. Positions 46-59 (EEELTPTDPDEETN) are enriched in acidic residues. The GH16 domain maps to 70 to 328 (YDFTGNTPPP…WIHTYQLVEE (259 aa)). Substrate is bound by residues W110, 119-129 (KAENSGVSDGK), 133-135 (KAT), E188, E193, and R224. E188 acts as the Nucleophile in catalysis. E193 acts as the Proton donor in catalysis.

This sequence belongs to the glycosyl hydrolase 16 family.

It localises to the secreted. The catalysed reaction is Hydrolysis of (1-&gt;4)-beta-D-galactosidic linkages in agarose, giving the tetramer as the predominant product.. Its function is as follows. Cleaves the beta-1,4-linkages between beta-D-galactose and alpha-L-3,6-anhydro-galactose residues in agarose. Cleaves agarose in a random manner with retention of the anomeric-bond configuration, producing beta-anomers that give rise progressively to alpha-anomers when mutarotation takes place. This chain is Beta-agarase C (agaC), found in Zobellia galactanivorans (strain DSM 12802 / CCUG 47099 / CIP 106680 / NCIMB 13871 / Dsij).